A 586-amino-acid polypeptide reads, in one-letter code: YTH domain-containing family protein 2 (586 aa).

Disordered stretches follow at residues 98 to 128, 141 to 181, and 301 to 464; these read LKEK…QPVQ, SQDQ…KESP, and QGLA…PLVS. Composition is skewed to polar residues over residues 107-128, 169-181, and 352-368; these read ALRQ…QPVQ, TLPT…KESP, and SSQA…TDIQ. The span at 398 to 418 shows a compositional bias: basic residues; it reads CARRHRSSSPRGRSGSHKSRR. Polar residues predominate over residues 421 to 436; the sequence is TDSPVSRSTTKSTPSR. The YTH domain maps to 435-576; the sequence is SRARQPGHRD…YCGRDLLRLM (142 aa). Residues 441 to 458 are compositionally biased toward basic and acidic residues; that stretch reads GHRDYREYRDDRNRDTKP.

It belongs to the YTHDF family. YTHDF1 subfamily.

In terms of biological role, specifically recognizes and binds N6-methyladenosine (m6A)-containing mRNAs, and regulates their stability. M6A is a modification present at internal sites of mRNAs and some non-coding RNAs and plays a role in mRNA stability and processing. Plays a role in pathogenicity towards plant host. The sequence is that of YTH domain-containing family protein 2 from Pyricularia oryzae (strain 70-15 / ATCC MYA-4617 / FGSC 8958) (Rice blast fungus).